The chain runs to 100 residues: Putative ESAT-6-like protein Y (100 aa).

It belongs to the WXG100 family.

This chain is Putative ESAT-6-like protein Y, found in Mycobacterium leprae (strain TN).